The chain runs to 100 residues: Class II hydrophobin 4 (100 aa).

The signal sequence occupies residues 1-17 (MQFYAIASLFLAGTAFA). 4 disulfides stabilise this stretch: Cys29-Cys79, Cys40-Cys70, Cys41-Cys53, and Cys80-Cys92.

The protein belongs to the cerato-ulmin hydrophobin family.

Its subcellular location is the secreted. It localises to the cell wall. In terms of biological role, aerial growth, conidiation, and dispersal of filamentous fungi in the environment rely upon a capability of their secreting small amphipathic proteins called hydrophobins (HPBs) with low sequence identity. Class I can self-assemble into an outermost layer of rodlet bundles on aerial cell surfaces, conferring cellular hydrophobicity that supports fungal growth, development and dispersal; whereas Class II form highly ordered films at water-air interfaces through intermolecular interactions but contribute nothing to the rodlet structure. Does not seem to be important for the ability to cause seedling disease. This Gibberella moniliformis (Maize ear and stalk rot fungus) protein is Class II hydrophobin 4.